Consider the following 777-residue polypeptide: Rho-GTPase-activating protein 8 (777 aa).

In terms of domain architecture, F-BAR spans 3–420; the sequence is SSFSNGFWSK…YQEIIQPESD (418 aa). Residues 117–172 adopt a coiled-coil conformation; sequence QKLQTSQQVLTNQIKSYEKKYYTLKKTKSAYYNKCRNLEDYEEESKESNETTSEAI. Positions 213-296 constitute a DEP domain; that stretch reads VLQEIPLQDY…WKDKAFQFAG (84 aa). The 197-residue stretch at 454 to 650 folds into the Rho-GAP domain; the sequence is VDVEFLSHRD…DLLTYGPSIF (197 aa). Positions 667 to 709 are disordered; that stretch reads LYQSSATPRSTDVSPTRPDSISSVRSHTAVESPRSSFEELQPS. Residues 668-692 show a composition bias toward polar residues; the sequence is YQSSATPRSTDVSPTRPDSISSVRS. Phosphoserine is present on residues serine 676 and serine 680. Residue threonine 682 is modified to Phosphothreonine. Residue serine 686 is modified to Phosphoserine. Phosphothreonine is present on threonine 694. Position 698 is a phosphoserine (serine 698).

In terms of assembly, interacts with pak1/shk1. Post-translationally, phosphorylated by pak1/shk1.

The protein localises to the cytoplasm. Its function is as follows. Acts in signal transduction. Negatively regulates the pak1/shk1 control pathway. In Schizosaccharomyces pombe (strain 972 / ATCC 24843) (Fission yeast), this protein is Rho-GTPase-activating protein 8 (rga8).